The chain runs to 156 residues: MSWSKVKYFFFDTPEEKEAAQYSYEKEQTDMKKQQDPPEQQDVTFPKAQPKQNVVSIETAKQSSKVVLLEPRTYSEAQGIADHLKGRRAVVINLQRMSTDQAVRIVDFLSGTVYAIGGDIQKIGPKTFMCTPENVDIVGAISELFGEEEDTNIKRW.

Over residues 23-36 (SYEKEQTDMKKQQD) the composition is skewed to basic and acidic residues. Positions 23-50 (SYEKEQTDMKKQQDPPEQQDVTFPKAQP) are disordered.

The protein belongs to the SepF family. In terms of assembly, homodimer. Interacts with FtsZ.

It localises to the cytoplasm. In terms of biological role, cell division protein that is part of the divisome complex and is recruited early to the Z-ring. Probably stimulates Z-ring formation, perhaps through the cross-linking of FtsZ protofilaments. Its function overlaps with FtsA. This is Cell division protein SepF from Bacillus thuringiensis (strain Al Hakam).